Here is a 105-residue protein sequence, read N- to C-terminus: Protein U4 (105 aa).

Residues 5–25 form a helical membrane-spanning segment; the sequence is FLLFLLLLVLVINPSLVVNMV.

Belongs to the nanovirus U4 protein family.

It localises to the membrane. In Faba bean necrotic yellows virus (isolate Egyptian EV1-93) (FBNYV), this protein is Protein U4 (DNA-U4).